A 233-amino-acid chain; its full sequence is Large ribosomal subunit protein uL1 (233 aa).

Belongs to the universal ribosomal protein uL1 family. Part of the 50S ribosomal subunit.

Functionally, binds directly to 23S rRNA. The L1 stalk is quite mobile in the ribosome, and is involved in E site tRNA release. Protein L1 is also a translational repressor protein, it controls the translation of the L11 operon by binding to its mRNA. The protein is Large ribosomal subunit protein uL1 of Shewanella sediminis (strain HAW-EB3).